The chain runs to 192 residues: MLILASQSPRRAELLSQIGVPFTTLSADIDETILPGETPEIYVQRLAKQKAQAGWQASVDIAENRLALGADTVVVIHEQVLGKPENFDDARRMLQRLSGQKHQVFTAVTITSGDQCESILVKTDVTFCDLTTSQIEEYWQTGEPRDKAGSYAIQGIGGKFVTHIKGSYSAVVGLPLYETNQLLSRMSLAHEC.

Catalysis depends on aspartate 71, which acts as the Proton acceptor.

It belongs to the Maf family. YhdE subfamily. A divalent metal cation serves as cofactor.

The protein localises to the cytoplasm. The catalysed reaction is dTTP + H2O = dTMP + diphosphate + H(+). It carries out the reaction UTP + H2O = UMP + diphosphate + H(+). Nucleoside triphosphate pyrophosphatase that hydrolyzes dTTP and UTP. May have a dual role in cell division arrest and in preventing the incorporation of modified nucleotides into cellular nucleic acids. The chain is dTTP/UTP pyrophosphatase from Pseudoalteromonas atlantica (strain T6c / ATCC BAA-1087).